A 97-amino-acid chain; its full sequence is RxLR effector protein CRE10 (97 aa).

An N-terminal signal peptide occupies residues 1 to 21 (MRLSYILVVVIAVTLQACVCA). The short motif at 48–66 (RLLRGVKKRTAEREVQEER) is the RxLR-dEER element.

Belongs to the RxLR effector family.

The protein resides in the secreted. It is found in the host cell. Functionally, effector that is involved in host plant infection. Contributes to virulence during the early infection stage, by inhibiting plant defense responses induced by both PAMP-triggered immunity (PTI) and effector-triggered immunity (ETI). In Phytophthora infestans (strain T30-4) (Potato late blight agent), this protein is RxLR effector protein CRE10.